A 314-amino-acid chain; its full sequence is tRNA pseudouridine synthase B (314 aa).

A substrate-binding site is contributed by His43. Asp48 functions as the Nucleophile in the catalytic mechanism. Tyr76, Tyr179, and Leu200 together coordinate substrate.

Belongs to the pseudouridine synthase TruB family. Type 1 subfamily.

The enzyme catalyses uridine(55) in tRNA = pseudouridine(55) in tRNA. Responsible for synthesis of pseudouridine from uracil-55 in the psi GC loop of transfer RNAs. In Salmonella arizonae (strain ATCC BAA-731 / CDC346-86 / RSK2980), this protein is tRNA pseudouridine synthase B.